The chain runs to 362 residues: mRNA decay activator protein ZFP36L2 (362 aa).

Basic and acidic residues predominate over residues 100-109; the sequence is SFSENGERSQ. The disordered stretch occupies residues 100–126; that stretch reads SFSENGERSQHLLHLQQQQQQKAGAQV. A compositionally biased stretch (low complexity) spans 111–120; it reads LLHLQQQQQQ. An RNA-binding motif is present at residues 130 to 135; it reads RYKTEL. 2 consecutive C3H1-type zinc fingers follow at residues 130-158 and 168-196; these read RYKT…HGFH and KYKT…HNAE. The segment at 147–188 is RNA-binding; that stretch reads YGEKCQFAHGFHELRSLTRHPKYKTELCRTFHTIGFCPYGPR. Disordered regions lie at residues 225–244 and 306–362; these read DSPL…SSSS and SESP…ISDD. The span at 327–346 shows a compositional bias: low complexity; that stretch reads YLSGSLSSGSLSGSDSPTLD.

Phosphorylated.

It localises to the nucleus. Its subcellular location is the cytoplasm. Zinc-finger RNA-binding protein that destabilizes several cytoplasmic AU-rich element (ARE)-containing mRNA transcripts by promoting their poly(A) tail removal or deadenylation, and hence provide a mechanism for attenuating protein synthesis. Acts as a 3'-untranslated region (UTR) ARE mRNA-binding adapter protein to communicate signaling events to the mRNA decay machinery. Functions by recruiting the CCR4-NOT deadenylase complex and probably other components of the cytoplasmic RNA decay machinery to the bound ARE-containing mRNAs, and hence promotes ARE-mediated mRNA deadenylation and decay processes. Binds to 3'-UTR ARE of numerous mRNAs. Also induces the degradation of ARE-containing mRNAs even in absence of poly(A) tail. Required for tubulogenesis during pronephros development. The chain is mRNA decay activator protein ZFP36L2 (zfp36l2) from Xenopus tropicalis (Western clawed frog).